A 423-amino-acid chain; its full sequence is Gamma-glutamyl phosphate reductase (423 aa).

It belongs to the gamma-glutamyl phosphate reductase family.

The protein resides in the cytoplasm. The catalysed reaction is L-glutamate 5-semialdehyde + phosphate + NADP(+) = L-glutamyl 5-phosphate + NADPH + H(+). It participates in amino-acid biosynthesis; L-proline biosynthesis; L-glutamate 5-semialdehyde from L-glutamate: step 2/2. Catalyzes the NADPH-dependent reduction of L-glutamate 5-phosphate into L-glutamate 5-semialdehyde and phosphate. The product spontaneously undergoes cyclization to form 1-pyrroline-5-carboxylate. This Paraburkholderia phymatum (strain DSM 17167 / CIP 108236 / LMG 21445 / STM815) (Burkholderia phymatum) protein is Gamma-glutamyl phosphate reductase.